The sequence spans 123 residues: Putative iron-sulfur cluster insertion protein ErpA (123 aa).

Positions 51, 115, and 117 each coordinate iron-sulfur cluster.

Belongs to the HesB/IscA family. In terms of assembly, homodimer. Iron-sulfur cluster is required as a cofactor.

Its function is as follows. Required for insertion of 4Fe-4S clusters. The sequence is that of Putative iron-sulfur cluster insertion protein ErpA from Burkholderia cenocepacia (strain HI2424).